We begin with the raw amino-acid sequence, 24 residues long: Humanin-like 7 (24 aa).

It belongs to the humanin family. As to expression, expressed in testis.

It localises to the secreted. Its subcellular location is the cytoplasm. In terms of biological role, plays a role as a neuroprotective and antiapoptotic factor. The protein is Humanin-like 7 of Homo sapiens (Human).